A 128-amino-acid chain; its full sequence is Holo-[acyl-carrier-protein] synthase (128 aa).

The Mg(2+) site is built by Asp-8 and Glu-57.

The protein belongs to the P-Pant transferase superfamily. AcpS family. Mg(2+) is required as a cofactor.

The protein resides in the cytoplasm. The catalysed reaction is apo-[ACP] + CoA = holo-[ACP] + adenosine 3',5'-bisphosphate + H(+). Transfers the 4'-phosphopantetheine moiety from coenzyme A to a Ser of acyl-carrier-protein. The protein is Holo-[acyl-carrier-protein] synthase of Syntrophus aciditrophicus (strain SB).